The primary structure comprises 670 residues: Receptor for retinol uptake stra6 (670 aa).

The Extracellular segment spans residues 1–38 (MSAETVNNYDYSDWYENAAPTKAPVEVIPPCDPTADEG). The helical transmembrane segment at 39–59 (LFHICIAAISLVVMLVLAILA) threads the bilayer. Residues 60–87 (RRQKLSDNQRGLTGLLSPVNFLDHTQHK) lie on the Cytoplasmic side of the membrane. The helical transmembrane segment at 88–108 (GLAVAVYGVLFCKLVGMVLSH) threads the bilayer. Residues 109–121 (HPLPFTKEVANKE) lie on the Extracellular side of the membrane. The chain crosses the membrane as a helical span at residues 122–142 (FWMILALLYYPALYYPLLACG). At 143–145 (TLH) the chain is on the cytoplasmic side. Residues 146-166 (NKVGYVLGSLLSWTHFGILVW) form a helical membrane-spanning segment. Residues 167 to 182 (QKVDCPKTPQIYKYYA) are Extracellular-facing. The helical transmembrane segment at 183–203 (LFGSLPQIACLAFLSFQYPLL) threads the bilayer. Residues 204-274 (LFKGLQNTET…PEDVFRFPLK (71 aa)) are Cytoplasmic-facing. The chain crosses the membrane as a helical span at residues 275-295 (LAISVVVAFIALYQMALLLIS). Over 296-346 (GVLPTLHIVRRGVDENIAFLLAGFNIILSNDRQEVVRIVVYYLWCVEICYV) the chain is Extracellular. A helical transmembrane segment spans residues 347 to 367 (SAVTLSCLVNLLMLMRSMVLH). The Cytoplasmic segment spans residues 368–401 (RSNLKGLYRGDSLNVFNCHRSIRPSRPALVCWMG). A helical membrane pass occupies residues 402–422 (FTSYQAAFLCLGMAIQTLVFF). At 423–452 (ICILFAVFLIIIPILWGTNLMLFHIIGNLW) the chain is on the extracellular side. Residues 453-473 (PFWLTLVLAALIQHVASRFLF) form a helical membrane-spanning segment. Residues 474–488 (IRKDGGTRDLNNRGS) are Cytoplasmic-facing. The segment at residues 489-526 (LFLLSYILFLVNVMIGVVLGIWRVVITALFNIVHLGRL) is an intramembrane region (helical). Residues 527–670 (DISLLNRNVE…KEAESAAASN (144 aa)) are Cytoplasmic-facing. Residues 600–626 (VSNAKRARAHWQLLYTLVNNPSLVGSR) form an interaction with calmodulin region. The segment at 640-670 (GALSRTSKEGSKKDGSVNEPSKEAESAAASN) is disordered. Residues 645 to 664 (TSKEGSKKDGSVNEPSKEAE) are compositionally biased toward basic and acidic residues.

In terms of assembly, homodimer. Interacts (via C-terminus) with calmodulin.

The protein localises to the cell membrane. In terms of biological role, retinol transporter. Accepts retinol from the extracellular retinol-binding protein rbp4, mediates retinol transport across the cell membrane, and then transmits retinol to the cytoplasmic retinol-binding protein rbp1. Required for normal vitamin A homeostasis. The polypeptide is Receptor for retinol uptake stra6 (Danio rerio (Zebrafish)).